A 349-amino-acid chain; its full sequence is tRNA-specific 2-thiouridylase MnmA (349 aa).

ATP contacts are provided by residues 7–14 (GLSGGVDS) and L33. Catalysis depends on C94, which acts as the Nucleophile. C94 and C193 are disulfide-bonded. G119 serves as a coordination point for ATP. The interval 143-145 (KDQ) is interaction with tRNA. C193 (cysteine persulfide intermediate) is an active-site residue. The segment at 298–299 (RY) is interaction with tRNA.

The protein belongs to the MnmA/TRMU family.

Its subcellular location is the cytoplasm. It catalyses the reaction S-sulfanyl-L-cysteinyl-[protein] + uridine(34) in tRNA + AH2 + ATP = 2-thiouridine(34) in tRNA + L-cysteinyl-[protein] + A + AMP + diphosphate + H(+). In terms of biological role, catalyzes the 2-thiolation of uridine at the wobble position (U34) of tRNA, leading to the formation of s(2)U34. The chain is tRNA-specific 2-thiouridylase MnmA from Rippkaea orientalis (strain PCC 8801 / RF-1) (Cyanothece sp. (strain PCC 8801)).